Consider the following 211-residue polypeptide: Large ribosomal subunit protein bL25 (211 aa).

Positions 188–211 (APKAAKVSTDDEAAAPAEEAPAAE) are disordered. The segment covering 201 to 211 (AAPAEEAPAAE) has biased composition (low complexity).

It belongs to the bacterial ribosomal protein bL25 family. CTC subfamily. As to quaternary structure, part of the 50S ribosomal subunit; part of the 5S rRNA/L5/L18/L25 subcomplex. Contacts the 5S rRNA. Binds to the 5S rRNA independently of L5 and L18.

Its function is as follows. This is one of the proteins that binds to the 5S RNA in the ribosome where it forms part of the central protuberance. The chain is Large ribosomal subunit protein bL25 from Colwellia psychrerythraea (strain 34H / ATCC BAA-681) (Vibrio psychroerythus).